A 467-amino-acid polypeptide reads, in one-letter code: Cysteine--tRNA ligase (467 aa).

Position 28 (Cys28) interacts with Zn(2+). The 'HIGH' region motif lies at 30–40 (ITAYDYSHIGH). Zn(2+)-binding residues include Cys211, His236, and Glu240. The short motif at 268 to 272 (KMSKS) is the 'KMSKS' region element. ATP is bound at residue Lys271.

This sequence belongs to the class-I aminoacyl-tRNA synthetase family. The cofactor is Zn(2+).

Its subcellular location is the cytoplasm. It carries out the reaction tRNA(Cys) + L-cysteine + ATP = L-cysteinyl-tRNA(Cys) + AMP + diphosphate. In Archaeoglobus fulgidus (strain ATCC 49558 / DSM 4304 / JCM 9628 / NBRC 100126 / VC-16), this protein is Cysteine--tRNA ligase (cysS).